A 212-amino-acid chain; its full sequence is 3-isopropylmalate dehydratase small subunit 1 (212 aa).

Belongs to the LeuD family. LeuD type 1 subfamily. As to quaternary structure, heterodimer of LeuC and LeuD.

The catalysed reaction is (2R,3S)-3-isopropylmalate = (2S)-2-isopropylmalate. The protein operates within amino-acid biosynthesis; L-leucine biosynthesis; L-leucine from 3-methyl-2-oxobutanoate: step 2/4. Catalyzes the isomerization between 2-isopropylmalate and 3-isopropylmalate, via the formation of 2-isopropylmaleate. The chain is 3-isopropylmalate dehydratase small subunit 1 from Chromobacterium violaceum (strain ATCC 12472 / DSM 30191 / JCM 1249 / CCUG 213 / NBRC 12614 / NCIMB 9131 / NCTC 9757 / MK).